We begin with the raw amino-acid sequence, 511 residues long: Glutamate/gamma-aminobutyrate antiporter (511 aa).

The Cytoplasmic portion of the chain corresponds to 1–13; that stretch reads MATSVQTGKAKQL. The chain crosses the membrane as a helical span at residues 14 to 36; it reads TLLGFFAITASMVMAVYEYPTFA. Residues 37–40 lie on the Periplasmic side of the membrane; the sequence is TSGF. A helical membrane pass occupies residues 41-64; sequence SLVFFLLLGGILWFIPVGLCAAEM. Residues 65 to 85 lie on the Cytoplasmic side of the membrane; that stretch reads ATVDGWEEGGVFAWVSNTLGP. The helical transmembrane segment at 86–112 threads the bilayer; sequence RWGFAAISFGYLQIAIGFIPMLYFVLG. Over 113–126 the chain is Periplasmic; the sequence is ALSYILKWPALNED. Residues 127 to 147 traverse the membrane as a helical segment; the sequence is PITKTIAALIILWALALTQFG. Over 148-151 the chain is Cytoplasmic; that stretch reads GTKY. The chain crosses the membrane as a helical span at residues 152-180; that stretch reads TARIAKVGFFAGILLPAFILIALAAIYLH. The Periplasmic segment spans residues 181-201; it reads SGAPVAIEMDSKTFFPDFSKV. A helical transmembrane segment spans residues 202–225; it reads GTLVVFVAFILSYMGVEASATHVN. At 226-229 the chain is on the cytoplasmic side; sequence EMSN. The helical transmembrane segment at 230 to 259 threads the bilayer; that stretch reads PGRDYPLAMLLLMVAAICLSSVGGLSIAMV. The Periplasmic segment spans residues 260–288; the sequence is IPGNEINLSAGVMQTFTVLMSHVAPEIEW. The helical transmembrane segment at 289 to 322 threads the bilayer; that stretch reads TVRVISALLLLGVLAEIASWIVGPSRGMYVTAQK. The Cytoplasmic segment spans residues 323 to 337; sequence NLLPAAFAKMNKNGV. A helical membrane pass occupies residues 338 to 359; sequence PVTLVISQLVITSIALIILTNT. The Periplasmic segment spans residues 360–362; it reads GGG. Residues 363-396 traverse the membrane as a helical segment; sequence NNMSFLIALALTVVIYLCAYFMLFIGYIVLVLKH. The Cytoplasmic portion of the chain corresponds to 397 to 409; the sequence is PDLKRTFNIPGGK. The helical transmembrane segment at 410-430 threads the bilayer; the sequence is GVKLVVAIVGLLTSIMAFIVS. At 431–443 the chain is on the periplasmic side; sequence FLPPDNIQGDSTD. The chain crosses the membrane as a helical span at residues 444-467; it reads MYVELLVVSFLVVLALPFILYAVH. The Cytoplasmic portion of the chain corresponds to 468-511; sequence DRKGKANTGVTLEPINSQNAPKGHFFLHPRARSPHYIVMNDKKH.

This sequence belongs to the amino acid-polyamine-organocation (APC) superfamily. Glutamate:GABA antiporter (GGA) (TC 2.A.3.7) family. In terms of assembly, monomer.

It localises to the cell inner membrane. The enzyme catalyses 4-aminobutanoate(in) + L-glutamate(out) = 4-aminobutanoate(out) + L-glutamate(in). Shows pH-dependent activity. The Glu/GABA transport activity is robust at pH 4.5 and rapidly decreases with increasing pH, with no detectable activity at pH 6.5 or above. The Glu analog L-trans-pyrrolidine-2,4-dicarboxylic acid (L-PDC) blocks the uptake of glutamate by selective inhibition. Functionally, involved in glutaminase-dependent acid resistance. Exchanges extracellular glutamate (Glu) for intracellular gamma-aminobutyric acid (GABA) under acidic conditions. The protonation states of substrates are crucial for transport. Selectively transports Glu with no net charge and GABA with a positive charge. Also efficiently transports glutamine and, to a smaller extent, methionine and leucine. When the extracellular pH drops below 2.5, can import L-glutamine and export either glutamate or GABA. The ability to survive the extremely acidic conditions of the stomach is essential for successful colonization of the host by commensal and pathogenic bacteria. The polypeptide is Glutamate/gamma-aminobutyrate antiporter (Escherichia coli (strain K12)).